Reading from the N-terminus, the 338-residue chain is Patr class I histocompatibility antigen, alpha chain G (338 aa).

The N-terminal stretch at 1-24 (MVVMAPRTLFLLLSGALTLTETWA) is a signal peptide. The alpha-1 stretch occupies residues 25 to 114 (GSHSMRYFSA…LRGYYNQSEA (90 aa)). Residues 25–308 (GSHSMRYFSA…KQSSLPTIPI (284 aa)) lie on the Extracellular side of the membrane. N-linked (GlcNAc...) asparagine glycosylation occurs at Asn110. An alpha-2 region spans residues 115 to 206 (SSHTLQWMIG…ENGKEMLQRA (92 aa)). Intrachain disulfides connect Cys125-Cys188 and Cys227-Cys283. Positions 207 to 298 (DPPKTHVTHH…GLPEPLMLRW (92 aa)) are alpha-3. One can recognise an Ig-like C1-type domain in the interval 209 to 299 (PKTHVTHHPV…LPEPLMLRWK (91 aa)). The tract at residues 299–308 (KQSSLPTIPI) is connecting peptide. The chain crosses the membrane as a helical span at residues 309–332 (MGIVAGLVVLAAVVTGAAVAAVLW). Topologically, residues 333–338 (RKKSSD) are cytoplasmic.

The protein belongs to the MHC class I family. As to quaternary structure, heterodimer of an alpha chain and a beta chain (beta-2-microglobulin). Homodimer; disulfide-linked. Binds to LILRB1 and LILRB2.

Its subcellular location is the cell membrane. Involved in the presentation of foreign antigens to the immune system. The sequence is that of Patr class I histocompatibility antigen, alpha chain G (Patr-G) from Pan troglodytes (Chimpanzee).